The primary structure comprises 632 residues: Cytosolic Fe-S cluster assembly factor NAR1 (632 aa).

Cys-20 is a binding site for [4Fe-4S] cluster. The tract at residues 27–53 (LPAKPEDSSNPYEVTTEDKAAASQPPP) is disordered. The [4Fe-4S] cluster site is built by Cys-62, Cys-65, and Cys-68. Disordered regions lie at residues 99 to 119 (WQTQ…NGHS) and 210 to 231 (LSPE…DTTP). A compositionally biased stretch (low complexity) spans 101-119 (TQNGTNGTNGTNGTTNGHS). The span at 211–221 (SPETSNPSTKP) shows a compositional bias: polar residues. 4 residues coordinate [4Fe-4S] cluster: Cys-240, Cys-295, Cys-486, and Cys-490. The disordered stretch occupies residues 542–573 (GSDSEEEKVDQDGDQNMQDATTNGHTSEPDIV). Residues 544-554 (DSEEEKVDQDG) show a composition bias toward acidic residues. Polar residues predominate over residues 555-567 (DQNMQDATTNGHT).

The protein belongs to the NARF family.

Component of the cytosolic Fe/S protein assembly machinery. Required for maturation of extramitochondrial Fe/S proteins. May play a role in the transfer of pre-assembled Fe/S clusters to target apoproteins. The polypeptide is Cytosolic Fe-S cluster assembly factor NAR1 (NAR1) (Phaeosphaeria nodorum (strain SN15 / ATCC MYA-4574 / FGSC 10173) (Glume blotch fungus)).